The chain runs to 231 residues: Cytidylate kinase (231 aa).

16–24 (GPAASGKST) is a binding site for ATP. A disordered region spans residues 176–205 (PDLDSLEQEITKRDRDDAEREHAPLKKHPE). Over residues 184–205 (EITKRDRDDAEREHAPLKKHPE) the composition is skewed to basic and acidic residues.

It belongs to the cytidylate kinase family. Type 1 subfamily.

Its subcellular location is the cytoplasm. It carries out the reaction CMP + ATP = CDP + ADP. It catalyses the reaction dCMP + ATP = dCDP + ADP. This is Cytidylate kinase from Pelodictyon phaeoclathratiforme (strain DSM 5477 / BU-1).